The following is a 402-amino-acid chain: Queuine tRNA-ribosyltransferase-like protein (402 aa).

Belongs to the queuine tRNA-ribosyltransferase family.

This is Queuine tRNA-ribosyltransferase-like protein from Theileria parva (East coast fever infection agent).